The following is a 213-amino-acid chain: Uridine kinase (213 aa).

Gly14–Ser21 lines the ATP pocket.

Belongs to the uridine kinase family.

The protein resides in the cytoplasm. It catalyses the reaction uridine + ATP = UMP + ADP + H(+). It carries out the reaction cytidine + ATP = CMP + ADP + H(+). Its pathway is pyrimidine metabolism; CTP biosynthesis via salvage pathway; CTP from cytidine: step 1/3. It participates in pyrimidine metabolism; UMP biosynthesis via salvage pathway; UMP from uridine: step 1/1. The protein is Uridine kinase of Vibrio parahaemolyticus serotype O3:K6 (strain RIMD 2210633).